A 358-amino-acid chain; its full sequence is DNA integrity scanning protein DisA (358 aa).

Residues 6 to 144 (RPTLREAVAR…RGERHVLTDS (139 aa)) form the DAC domain. Residues Gly-73, Leu-91, and 104–108 (TRHRS) each bind ATP.

It belongs to the DisA family. In terms of assembly, homooctamer. Mg(2+) is required as a cofactor.

It carries out the reaction 2 ATP = 3',3'-c-di-AMP + 2 diphosphate. In terms of biological role, participates in a DNA-damage check-point. DisA forms globular foci that rapidly scan along the chromosomes searching for lesions. Also has diadenylate cyclase activity, catalyzing the condensation of 2 ATP molecules into cyclic di-AMP (c-di-AMP). c-di-AMP likely acts as a signaling molecule that may couple DNA integrity with a cellular process. The protein is DNA integrity scanning protein DisA of Mycobacterium tuberculosis (strain ATCC 25177 / H37Ra).